The sequence spans 119 residues: MIIGTGIDIVELERIQSMVEKHPRFVKKILTENEQEVFARLSRRRRLEYIAGRFAAKEAFVKAVGTGISAEYGWHDLEVLSDERGKPVLSVNLDATIHVSISHSQSYAIAQVILERLSS.

Residues aspartate 8 and glutamate 58 each coordinate Mg(2+).

It belongs to the P-Pant transferase superfamily. AcpS family. Mg(2+) serves as cofactor.

It localises to the cytoplasm. The enzyme catalyses apo-[ACP] + CoA = holo-[ACP] + adenosine 3',5'-bisphosphate + H(+). Its function is as follows. Transfers the 4'-phosphopantetheine moiety from coenzyme A to a Ser of acyl-carrier-protein. This is Holo-[acyl-carrier-protein] synthase from Halalkalibacterium halodurans (strain ATCC BAA-125 / DSM 18197 / FERM 7344 / JCM 9153 / C-125) (Bacillus halodurans).